The chain runs to 423 residues: COP9 signalosome complex subunit 3 (423 aa).

A PCI domain is found at 197–365 (NFERAMYFYE…GMVCFHDSPE (169 aa)). A compositionally biased stretch (polar residues) spans 401–410 (PQFVQKSMGS). The tract at residues 401–423 (PQFVQKSMGSQEDDSGSKPSSYS) is disordered.

Belongs to the CSN3 family. As to quaternary structure, component of the CSN complex, probably composed of cops1, cops2, cops3, cops4, cops5, cops6, cops7, cops8 and cops9.

The protein localises to the cytoplasm. It localises to the nucleus. Functionally, component of the COP9 signalosome complex (CSN), a complex involved in various cellular and developmental processes. The CSN complex is an essential regulator of the ubiquitin (Ubl) conjugation pathway by mediating the deneddylation of the cullin subunits of E3 ligase complexes, leading to modify the Ubl ligase activity. This is COP9 signalosome complex subunit 3 (cops3) from Xenopus laevis (African clawed frog).